Here is a 423-residue protein sequence, read N- to C-terminus: MASALEQFVNSVRQLSAQGQMTQLCELINKSGELLAKNLSHLDTVLGALDVQEHSLGVLAVLFVKFSMPSIPDFETLFSQVQLFISTCNGEHIRYATDTFAGLCHQLTNALVERKQPLRGISILRQAIDKMQMNTNQLTSIHADLCQLCLLAKCFKPALPYLDVDMMDICKENGAYDAKHFLCYYYYGGMIYTGLKNFERALYFYEQAITTPAMAVSHIMLESYKKYILVSLILLGKVQQLPKYTSQIVGRFIKPLSNAYHELAQVYSTNKPSELRNLVNKHSETFTRDNNMGLVKQCLSSLYKKNIQRLTKTFLTLSLQDMASRVQLSGPQEAEKYVLHMIEDGEIFASINQKDGMVCFHDNPEKYNNPAMLHNIDQEMLKCIELDERLKAMDQEITVNPQFVQKSMGSQEDDSGTKPSSYS.

One can recognise a PCI domain in the interval Asn-197–Glu-365. The segment at Gln-402–Ser-423 is disordered.

The protein belongs to the CSN3 family. In terms of assembly, component of the CSN complex, probably composed of COPS1, COPS2, COPS3, COPS4, COPS5, COPS6, COPS7, COPS8 and COPS9.

It localises to the cytoplasm. The protein resides in the nucleus. In terms of biological role, component of the COP9 signalosome complex (CSN), a complex involved in various cellular and developmental processes. The CSN complex is an essential regulator of the ubiquitin (Ubl) conjugation pathway by mediating the deneddylation of the cullin subunits of E3 ligase complexes, leading to modify the Ubl ligase activity. The protein is COP9 signalosome complex subunit 3 (COPS3) of Gallus gallus (Chicken).